Reading from the N-terminus, the 817-residue chain is Cargo-transport protein YPP1 (817 aa).

It belongs to the YPP1 family. As to quaternary structure, interacts with ribosomes.

It localises to the cytoplasmic granule. Its subcellular location is the cell membrane. In terms of biological role, involved in endocytosis. This Saccharomyces cerevisiae (strain ATCC 204508 / S288c) (Baker's yeast) protein is Cargo-transport protein YPP1 (YPP1).